Reading from the N-terminus, the 248-residue chain is Triosephosphate isomerase (248 aa).

Substrate-binding residues include Asn10 and Lys12. His95 serves as the catalytic Electrophile. The active-site Proton acceptor is Glu165.

This sequence belongs to the triosephosphate isomerase family. As to quaternary structure, homodimer.

It catalyses the reaction D-glyceraldehyde 3-phosphate = dihydroxyacetone phosphate. The protein operates within carbohydrate biosynthesis; gluconeogenesis. It participates in carbohydrate degradation; glycolysis; D-glyceraldehyde 3-phosphate from glycerone phosphate: step 1/1. The polypeptide is Triosephosphate isomerase (TPI1) (Debaryomyces hansenii (strain ATCC 36239 / CBS 767 / BCRC 21394 / JCM 1990 / NBRC 0083 / IGC 2968) (Yeast)).